The primary structure comprises 426 residues: Enolase (426 aa).

Gln163 serves as a coordination point for (2R)-2-phosphoglycerate. Glu205 acts as the Proton donor in catalysis. Asp242, Glu283, and Asp310 together coordinate Mg(2+). 4 residues coordinate (2R)-2-phosphoglycerate: Lys335, Arg364, Ser365, and Lys386. The active-site Proton acceptor is Lys335.

It belongs to the enolase family. Requires Mg(2+) as cofactor.

Its subcellular location is the cytoplasm. It localises to the secreted. The protein resides in the cell surface. The catalysed reaction is (2R)-2-phosphoglycerate = phosphoenolpyruvate + H2O. The protein operates within carbohydrate degradation; glycolysis; pyruvate from D-glyceraldehyde 3-phosphate: step 4/5. Catalyzes the reversible conversion of 2-phosphoglycerate (2-PG) into phosphoenolpyruvate (PEP). It is essential for the degradation of carbohydrates via glycolysis. In Clavibacter sepedonicus (Clavibacter michiganensis subsp. sepedonicus), this protein is Enolase.